A 298-amino-acid chain; its full sequence is Ribosomal protein L11 methyltransferase (298 aa).

Thr-152, Gly-173, Asp-195, and Asn-234 together coordinate S-adenosyl-L-methionine.

Belongs to the methyltransferase superfamily. PrmA family.

It is found in the cytoplasm. It carries out the reaction L-lysyl-[protein] + 3 S-adenosyl-L-methionine = N(6),N(6),N(6)-trimethyl-L-lysyl-[protein] + 3 S-adenosyl-L-homocysteine + 3 H(+). Functionally, methylates ribosomal protein L11. This Ralstonia nicotianae (strain ATCC BAA-1114 / GMI1000) (Ralstonia solanacearum) protein is Ribosomal protein L11 methyltransferase.